A 951-amino-acid polypeptide reads, in one-letter code: Valine--tRNA ligase (951 aa).

Positions 42 to 52 match the 'HIGH' region motif; it reads PNVTGSLHMGH. The short motif at 554 to 558 is the 'KMSKS' region element; that stretch reads KMSKS. K557 contributes to the ATP binding site. Residues 882-951 are a coiled coil; sequence LIDKDAELAR…EEQKATIAAL (70 aa).

Belongs to the class-I aminoacyl-tRNA synthetase family. ValS type 1 subfamily. In terms of assembly, monomer.

Its subcellular location is the cytoplasm. The catalysed reaction is tRNA(Val) + L-valine + ATP = L-valyl-tRNA(Val) + AMP + diphosphate. Functionally, catalyzes the attachment of valine to tRNA(Val). As ValRS can inadvertently accommodate and process structurally similar amino acids such as threonine, to avoid such errors, it has a 'posttransfer' editing activity that hydrolyzes mischarged Thr-tRNA(Val) in a tRNA-dependent manner. The sequence is that of Valine--tRNA ligase from Vibrio vulnificus (strain CMCP6).